A 167-amino-acid chain; its full sequence is Crossover junction endodeoxyribonuclease RuvC (167 aa).

Active-site residues include Asp7, Glu67, and Asp139. Mg(2+)-binding residues include Asp7, Glu67, and Asp139.

This sequence belongs to the RuvC family. As to quaternary structure, homodimer which binds Holliday junction (HJ) DNA. The HJ becomes 2-fold symmetrical on binding to RuvC with unstacked arms; it has a different conformation from HJ DNA in complex with RuvA. In the full resolvosome a probable DNA-RuvA(4)-RuvB(12)-RuvC(2) complex forms which resolves the HJ. Mg(2+) is required as a cofactor.

Its subcellular location is the cytoplasm. It catalyses the reaction Endonucleolytic cleavage at a junction such as a reciprocal single-stranded crossover between two homologous DNA duplexes (Holliday junction).. The RuvA-RuvB-RuvC complex processes Holliday junction (HJ) DNA during genetic recombination and DNA repair. Endonuclease that resolves HJ intermediates. Cleaves cruciform DNA by making single-stranded nicks across the HJ at symmetrical positions within the homologous arms, yielding a 5'-phosphate and a 3'-hydroxyl group; requires a central core of homology in the junction. The consensus cleavage sequence is 5'-(A/T)TT(C/G)-3'. Cleavage occurs on the 3'-side of the TT dinucleotide at the point of strand exchange. HJ branch migration catalyzed by RuvA-RuvB allows RuvC to scan DNA until it finds its consensus sequence, where it cleaves and resolves the cruciform DNA. In Akkermansia muciniphila (strain ATCC BAA-835 / DSM 22959 / JCM 33894 / BCRC 81048 / CCUG 64013 / CIP 107961 / Muc), this protein is Crossover junction endodeoxyribonuclease RuvC.